We begin with the raw amino-acid sequence, 140 residues long: Large ribosomal subunit protein uL11 (140 aa).

The protein belongs to the universal ribosomal protein uL11 family. In terms of assembly, part of the ribosomal stalk of the 50S ribosomal subunit. Interacts with L10 and the large rRNA to form the base of the stalk. L10 forms an elongated spine to which L12 dimers bind in a sequential fashion forming a multimeric L10(L12)X complex. Post-translationally, one or more lysine residues are methylated.

Its function is as follows. Forms part of the ribosomal stalk which helps the ribosome interact with GTP-bound translation factors. In Staphylococcus carnosus (strain TM300), this protein is Large ribosomal subunit protein uL11.